The sequence spans 176 residues: MLRFLNQCSQGRGAWLLMAFTALALELTALWFQHVMLLKPCVLCIYERCALFGVLGAALIGAIAPKTPLRYVAMVIWLYSAFRGVQLTYEHTMLQLYPSPFATCDFMARFPEWLPLDKWVPQVFVASGDCAERQWEFLGLEMPQWLLGIFIAYLIVAVLVVISQPFKAKKRDLFGR.

The Cytoplasmic segment spans residues 1 to 14 (MLRFLNQCSQGRGA). A helical membrane pass occupies residues 15–31 (WLLMAFTALALELTALW). Residues 32 to 49 (FQHVMLLKPCVLCIYERC) lie on the Periplasmic side of the membrane. A disulfide bridge connects residues Cys41 and Cys44. The chain crosses the membrane as a helical span at residues 50 to 65 (ALFGVLGAALIGAIAP). Residues 66–71 (KTPLRY) lie on the Cytoplasmic side of the membrane. The chain crosses the membrane as a helical span at residues 72–89 (VAMVIWLYSAFRGVQLTY). At 90–144 (EHTMLQLYPSPFATCDFMARFPEWLPLDKWVPQVFVASGDCAERQWEFLGLEMPQ) the chain is on the periplasmic side. The cysteines at positions 104 and 130 are disulfide-linked. Residues 145 to 163 (WLLGIFIAYLIVAVLVVIS) form a helical membrane-spanning segment. Residues 164 to 176 (QPFKAKKRDLFGR) lie on the Cytoplasmic side of the membrane.

Belongs to the DsbB family.

It is found in the cell inner membrane. Its function is as follows. Required for disulfide bond formation in some periplasmic proteins. Acts by oxidizing the DsbA protein. The polypeptide is Disulfide bond formation protein B (Escherichia coli O1:K1 / APEC).